The primary structure comprises 920 residues: Probable helicase HelY (920 aa).

A Helicase ATP-binding domain is found at 26–184 (CAALERGHGV…WVQTVRGDTT (159 aa)). 39–46 (APTGAGKT) is a binding site for ATP. The DEVH box motif lies at 132–135 (DEVH). The region spanning 265 to 469 (EVIAILDAEG…SYNMTINLVH (205 aa)) is the Helicase C-terminal domain.

The protein belongs to the helicase family. SKI2 subfamily.

The chain is Probable helicase HelY (helY) from Mycobacterium leprae (strain TN).